The sequence spans 536 residues: Cytochrome c oxidase subunit 1 (536 aa).

A helical membrane pass occupies residues 19–39; sequence IGMTYLGFGMLSAMMGTGMSV. Glutamate 44 serves as a coordination point for Ca(2+). Histidine 67 contributes to the Fe(II)-heme a binding site. The next 6 helical transmembrane spans lie at 69–89, 103–123, 152–172, 188–208, 240–260, and 273–293; these read LLMM…NFFL, LNNI…CSVL, AMFA…NFMV, PLFA…LPVL, LFWF…FGVM, and FGEM…FLVW. Histidine 246 is a binding site for Cu cation. A cross-link (1'-histidyl-3'-tyrosine (His-Tyr)) is located at residues 246–250; that stretch reads HPEVY. Tyrosine 250 lines the O2 pocket. Residues histidine 295 and histidine 296 each coordinate Cu cation. Transmembrane regions (helical) follow at residues 315–335 and 341–361; these read MVIA…IYGG and VPML…LTGV. Mg(2+) is bound by residues histidine 373 and aspartate 374. Histidine 381 serves as a coordination point for heme a3. Histidine 383 serves as a coordination point for Fe(II)-heme a. Helical transmembrane passes span 388–408 and 418–438; these read MGAL…MFGL and HFWL…FLGL. Proline 446 contacts Ca(2+). A helical membrane pass occupies residues 461–481; the sequence is MGSAMSVMSVLVGLKSVLVQL.

This sequence belongs to the heme-copper respiratory oxidase family. As to quaternary structure, component of the cytochrome c oxidase (complex IV, CIV), a multisubunit enzyme composed of a catalytic core of 3 subunits and several supernumerary subunits. The complex exists as a monomer or a dimer and forms supercomplexes (SCs) in the inner mitochondrial membrane with ubiquinol-cytochrome c oxidoreductase (cytochrome b-c1 complex, complex III, CIII). Heme is required as a cofactor. It depends on Cu cation as a cofactor.

The protein localises to the mitochondrion inner membrane. The catalysed reaction is 4 Fe(II)-[cytochrome c] + O2 + 8 H(+)(in) = 4 Fe(III)-[cytochrome c] + 2 H2O + 4 H(+)(out). It functions in the pathway energy metabolism; oxidative phosphorylation. Functionally, component of the cytochrome c oxidase, the last enzyme in the mitochondrial electron transport chain which drives oxidative phosphorylation. The respiratory chain contains 3 multisubunit complexes succinate dehydrogenase (complex II, CII), ubiquinol-cytochrome c oxidoreductase (cytochrome b-c1 complex, complex III, CIII) and cytochrome c oxidase (complex IV, CIV), that cooperate to transfer electrons derived from NADH and succinate to molecular oxygen, creating an electrochemical gradient over the inner membrane that drives transmembrane transport and the ATP synthase. Cytochrome c oxidase is the component of the respiratory chain that catalyzes the reduction of oxygen to water. Electrons originating from reduced cytochrome c in the intermembrane space (IMS) are transferred via the dinuclear copper A center (CU(A)) of subunit 2 and heme A of subunit 1 to the active site in subunit 1, a binuclear center (BNC) formed by heme A3 and copper B (CU(B)). The BNC reduces molecular oxygen to 2 water molecules using 4 electrons from cytochrome c in the IMS and 4 protons from the mitochondrial matrix. This is Cytochrome c oxidase subunit 1 (COX1) from Debaryomyces hansenii (strain ATCC 36239 / CBS 767 / BCRC 21394 / JCM 1990 / NBRC 0083 / IGC 2968) (Yeast).